The following is a 227-amino-acid chain: 4'-phosphopantetheinyl transferase PptT (227 aa).

CoA is bound by residues Arg-48, Arg-56, 75 to 78, 92 to 93, and Asp-114; these read KGDK and TH. Mg(2+)-binding residues include Asp-114, Ala-115, and Glu-116. The CoA site is built by Glu-157, Lys-161, and Leu-171.

It belongs to the P-Pant transferase superfamily. It depends on Mg(2+) as a cofactor.

It catalyses the reaction apo-[ACP] + CoA = holo-[ACP] + adenosine 3',5'-bisphosphate + H(+). With respect to regulation, inhibited by the amidino-urea compound 1-[(2,6-diethylphenyl)-3-N-ethylcarbamimodoyl]urea (compound 8918). It acts by binding to the phosphopantetheine pocket in the active site. Inhibition by compound 8918 kills M.tuberculosis. In terms of biological role, transfers the 4'-phosphopantetheine moiety from coenzyme A to a Ser of acyl-carrier-protein. Involved in post-translational modification of various type-I polyketide synthases required for the formation of both mycolic acids and lipid virulence factors. Acts on Pks13, Mas, PpsA, PpsB, PpsC and PpsD. Also acts on AcpM, the meromycolate extension acyl carrier protein. In addition, is involved in the activation of the acyl carrier protein MbtL and the nonribosomal peptides synthases MbtB and MbtE, which are involved in the biosynthesis of the siderophore mycobactin. Its function is as follows. Required for the replication and survival of Mycobacterium during the acute and chronic phases of infection in mice. The sequence is that of 4'-phosphopantetheinyl transferase PptT from Mycobacterium tuberculosis (strain ATCC 25618 / H37Rv).